Here is a 216-residue protein sequence, read N- to C-terminus: Imidazole glycerol phosphate synthase subunit HisH (216 aa).

Residues 2 to 216 (RVAIIDYGSG…LITNFLRWRP (215 aa)) form the Glutamine amidotransferase type-1 domain. C88 acts as the Nucleophile in catalysis. Residues H196 and E198 contribute to the active site.

Heterodimer of HisH and HisF.

It is found in the cytoplasm. It catalyses the reaction 5-[(5-phospho-1-deoxy-D-ribulos-1-ylimino)methylamino]-1-(5-phospho-beta-D-ribosyl)imidazole-4-carboxamide + L-glutamine = D-erythro-1-(imidazol-4-yl)glycerol 3-phosphate + 5-amino-1-(5-phospho-beta-D-ribosyl)imidazole-4-carboxamide + L-glutamate + H(+). The catalysed reaction is L-glutamine + H2O = L-glutamate + NH4(+). It functions in the pathway amino-acid biosynthesis; L-histidine biosynthesis; L-histidine from 5-phospho-alpha-D-ribose 1-diphosphate: step 5/9. Functionally, IGPS catalyzes the conversion of PRFAR and glutamine to IGP, AICAR and glutamate. The HisH subunit catalyzes the hydrolysis of glutamine to glutamate and ammonia as part of the synthesis of IGP and AICAR. The resulting ammonia molecule is channeled to the active site of HisF. This chain is Imidazole glycerol phosphate synthase subunit HisH, found in Mesorhizobium japonicum (strain LMG 29417 / CECT 9101 / MAFF 303099) (Mesorhizobium loti (strain MAFF 303099)).